The following is a 517-amino-acid chain: Superoxide-generating NADPH oxidase heavy chain subunit A (517 aa).

Residues 1–19 (MRLPTKEEIQRYWVNEGNK) lie on the Cytoplasmic side of the membrane. The chain crosses the membrane as a helical span at residues 20–40 (LILVILYTLGNIAAFVYTFVH). Residues 41-62 (YYNSPAFEVVGYGVCFARGCAQ) lie on the Extracellular side of the membrane. The Ferric oxidoreductase domain maps to 58–201 (RGCAQLLKLN…LFVVFFGLLV (144 aa)). A helical membrane pass occupies residues 63-83 (LLKLNCALILVPVLRNLLSFL). The Cytoplasmic portion of the chain corresponds to 84–97 (RGTFLNNYVPFDKN). The chain crosses the membrane as a helical span at residues 98–118 (IVFHKLIAWVICFATFGHVMA). Residues H101 and H115 each coordinate heme. At 119–149 (HFNNFRLYQDITPQEYKRILGIDYPNLTPIK) the chain is on the extracellular side. A helical membrane pass occupies residues 150-170 (YAFATLAGWTGHVVCIVMVLM). Over 171–184 (YTSAVESIRRPMFE) the chain is Cytoplasmic. Residues 185 to 205 (GFWYTHHLFVVFFGLLVVHGL) traverse the membrane as a helical segment. Positions 190 and 203 each coordinate heme. H206 is a topological domain (extracellular). A helical transmembrane segment spans residues 207–227 (SILEPTSFWKWVIGPCALYIV). The Cytoplasmic portion of the chain corresponds to 228–517 (ERLIRLLRSK…CRFHYNKENF (290 aa)). In terms of domain architecture, FAD-binding FR-type spans 229–349 (RLIRLLRSKK…DGPFGAASEE (121 aa)). Position 283-289 (283-289 (HPFTITS)) interacts with FAD.

As to quaternary structure, composed of a heavy chain and a light chain. FAD is required as a cofactor.

It localises to the membrane. Critical component of the membrane-bound oxidase that generates superoxide. It is the terminal component of a respiratory chain that transfers single electrons from cytoplasmic NADPH across the plasma membrane to molecular oxygen on the exterior. The sequence is that of Superoxide-generating NADPH oxidase heavy chain subunit A (noxA) from Dictyostelium discoideum (Social amoeba).